Consider the following 244-residue polypeptide: tRNA uridine(34) hydroxylase (244 aa).

The 91-residue stretch at 129 to 219 (QGRELVMLDT…GILKYFEETD (91 aa)) folds into the Rhodanese domain. The active-site Cysteine persulfide intermediate is the cysteine 183.

This sequence belongs to the TrhO family.

The enzyme catalyses uridine(34) in tRNA + AH2 + O2 = 5-hydroxyuridine(34) in tRNA + A + H2O. Functionally, catalyzes oxygen-dependent 5-hydroxyuridine (ho5U) modification at position 34 in tRNAs. The protein is tRNA uridine(34) hydroxylase of Bordetella bronchiseptica (strain ATCC BAA-588 / NCTC 13252 / RB50) (Alcaligenes bronchisepticus).